Here is a 133-residue protein sequence, read N- to C-terminus: Salivary cystatin-L2 (133 aa).

The first 18 residues, 1 to 18, serve as a signal peptide directing secretion; it reads MTSSLALVLLLGGAAVCA. A Cystatin domain is found at 34-118; that stretch reads DDPKYLELAH…RTCTAVIYEN (85 aa).

It belongs to the cystatin family. In terms of tissue distribution, salivary gland, midgut and other tissues.

It is found in the secreted. Its function is as follows. Inhibitor of cysteine proteinases. Inhibits host cathepsin L (CTSL) and S (CTSS). Modulates production of various cytokines and chemokines in lipopolysaccharide (LPS)-stimulated mouse dendritic cell. Suppresses maturation of mouse bone-marrow-derived dendritic cells (BMDCs). Functionally, (Microbial infection) Modulates Borrelia miyamotoi-stimulated immune responses in mice by suppressing activities of host dendritic and T-cells. This Ixodes persulcatus (Taiga tick) protein is Salivary cystatin-L2.